The sequence spans 147 residues: Small ribosomal subunit protein uS5 (147 aa).

The S5 DRBM domain maps to 9–72 (FEEVIVDIGR…DDAFKNIVEV (64 aa)).

This sequence belongs to the universal ribosomal protein uS5 family. In terms of assembly, part of the 30S ribosomal subunit. Contacts proteins S4 and S8.

Its function is as follows. With S4 and S12 plays an important role in translational accuracy. Located at the back of the 30S subunit body where it stabilizes the conformation of the head with respect to the body. The polypeptide is Small ribosomal subunit protein uS5 (Campylobacter jejuni subsp. jejuni serotype O:6 (strain 81116 / NCTC 11828)).